Consider the following 426-residue polypeptide: Histidine--tRNA ligase (426 aa).

Belongs to the class-II aminoacyl-tRNA synthetase family. As to quaternary structure, homodimer.

Its subcellular location is the cytoplasm. It catalyses the reaction tRNA(His) + L-histidine + ATP = L-histidyl-tRNA(His) + AMP + diphosphate + H(+). The sequence is that of Histidine--tRNA ligase from Streptococcus equi subsp. zooepidemicus (strain MGCS10565).